A 268-amino-acid polypeptide reads, in one-letter code: NH(3)-dependent NAD(+) synthetase (268 aa).

46-53 is a binding site for ATP; that stretch reads GISGGQDS. D52 is a binding site for Mg(2+). R140 lines the deamido-NAD(+) pocket. An ATP-binding site is contributed by T160. E165 is a binding site for Mg(2+). Positions 173 and 180 each coordinate deamido-NAD(+). Residues K189 and T211 each contribute to the ATP site. 260–261 lines the deamido-NAD(+) pocket; that stretch reads HK.

Belongs to the NAD synthetase family. In terms of assembly, homodimer.

The enzyme catalyses deamido-NAD(+) + NH4(+) + ATP = AMP + diphosphate + NAD(+) + H(+). It functions in the pathway cofactor biosynthesis; NAD(+) biosynthesis; NAD(+) from deamido-NAD(+) (ammonia route): step 1/1. Catalyzes the ATP-dependent amidation of deamido-NAD to form NAD. Uses ammonia as a nitrogen source. The protein is NH(3)-dependent NAD(+) synthetase of Buchnera aphidicola subsp. Schizaphis graminum (strain Sg).